The primary structure comprises 232 residues: Octanoyltransferase (232 aa).

The region spanning 43–231 (LPTSNYLLFV…HLTHLFEAEI (189 aa)) is the BPL/LPL catalytic domain. Substrate contacts are provided by residues 88–95 (RGGDITYH), 160–162 (AMG), and 173–175 (GFA). C191 acts as the Acyl-thioester intermediate in catalysis.

Belongs to the LipB family.

It localises to the cytoplasm. It carries out the reaction octanoyl-[ACP] + L-lysyl-[protein] = N(6)-octanoyl-L-lysyl-[protein] + holo-[ACP] + H(+). It functions in the pathway protein modification; protein lipoylation via endogenous pathway; protein N(6)-(lipoyl)lysine from octanoyl-[acyl-carrier-protein]: step 1/2. Catalyzes the transfer of endogenously produced octanoic acid from octanoyl-acyl-carrier-protein onto the lipoyl domains of lipoate-dependent enzymes. Lipoyl-ACP can also act as a substrate although octanoyl-ACP is likely to be the physiological substrate. The polypeptide is Octanoyltransferase (Flavobacterium johnsoniae (strain ATCC 17061 / DSM 2064 / JCM 8514 / BCRC 14874 / CCUG 350202 / NBRC 14942 / NCIMB 11054 / UW101) (Cytophaga johnsonae)).